The sequence spans 169 residues: MSSKELQEGQDGLVEKLVSVRRVAKVVKGGRVFGFSALTVVGDGEGRVGYGSGKANEVPVAIKKAMEKARRNMKDVHLDGGTLQYPINFKQGAANIVMLPASDGTGIIAGGAMRAVLEAAGVKDVLAKCVGTTRPVNVVRSTVNALTGMSSPELIAAKRGKSVEEILGE.

In terms of domain architecture, S5 DRBM spans 13–76 (LVEKLVSVRR…EKARRNMKDV (64 aa)).

This sequence belongs to the universal ribosomal protein uS5 family. Part of the 30S ribosomal subunit. Contacts proteins S4 and S8.

With S4 and S12 plays an important role in translational accuracy. Functionally, located at the back of the 30S subunit body where it stabilizes the conformation of the head with respect to the body. The polypeptide is Small ribosomal subunit protein uS5 (Hydrogenovibrio crunogenus (strain DSM 25203 / XCL-2) (Thiomicrospira crunogena)).